The primary structure comprises 70 residues: DNA gyrase inhibitor YacG (70 aa).

Zn(2+)-binding residues include Cys-9, Cys-12, Cys-28, and Cys-32. The tract at residues 43-70 (ESRKIPGSSIDPESIVTSNNKQDNEDEQ) is disordered.

The protein belongs to the DNA gyrase inhibitor YacG family. In terms of assembly, interacts with GyrB. Requires Zn(2+) as cofactor.

Inhibits all the catalytic activities of DNA gyrase by preventing its interaction with DNA. Acts by binding directly to the C-terminal domain of GyrB, which probably disrupts DNA binding by the gyrase. In Legionella pneumophila (strain Paris), this protein is DNA gyrase inhibitor YacG.